Reading from the N-terminus, the 157-residue chain is SsrA-binding protein (157 aa).

The protein belongs to the SmpB family.

Its subcellular location is the cytoplasm. In terms of biological role, required for rescue of stalled ribosomes mediated by trans-translation. Binds to transfer-messenger RNA (tmRNA), required for stable association of tmRNA with ribosomes. tmRNA and SmpB together mimic tRNA shape, replacing the anticodon stem-loop with SmpB. tmRNA is encoded by the ssrA gene; the 2 termini fold to resemble tRNA(Ala) and it encodes a 'tag peptide', a short internal open reading frame. During trans-translation Ala-aminoacylated tmRNA acts like a tRNA, entering the A-site of stalled ribosomes, displacing the stalled mRNA. The ribosome then switches to translate the ORF on the tmRNA; the nascent peptide is terminated with the 'tag peptide' encoded by the tmRNA and targeted for degradation. The ribosome is freed to recommence translation, which seems to be the essential function of trans-translation. The sequence is that of SsrA-binding protein from Levilactobacillus brevis (strain ATCC 367 / BCRC 12310 / CIP 105137 / JCM 1170 / LMG 11437 / NCIMB 947 / NCTC 947) (Lactobacillus brevis).